Here is a 611-residue protein sequence, read N- to C-terminus: MAVILSVDPCYAGLVGLAEGFRTSNPPRIRECIQCLQAILQFNPPPATQAKTHLQIGRILQQYTKNDDLARRTLEKAVSAELGHGYEEISFEASSILSLVYKDQGQYPLAKQVLRQALEITSGENLYFWQFRLFFQLAEVHACDNEFTASVEVLEMGERIAEQCGSQYMRYNIRHSHNCIIIVLLIMKDVNRVSNILMSTGSFLERWQGQSYQRESLVVFHLLLRVWQLLSVGQAKTVRPYLKQLQQSIQNLTTMTFEGMQPGPNVYEAEKFEWLPREHLCVLVYLVTVMHSMYAGYMDKVLKYSAKALNQVERLKVTSPSALVSVFQLMLLEHTIMCRVVQGQPAHAIKEISQVYQTLKHENCLVRAHKPILHTLLGLYAMSMNLMEQATTHFNIAFKTADNPVLANFVGLNLSIIYIRAGESKQIELSSVMSSIHPSNMATNSHSLQAGYYYVCALRAFFQTRIQDAKKYLRESLKIANAEDLNRLTACSLVLLGHTFLASGNPQEALNMVLPATQLSGKIPDNYIQLWAAGLLRDLYGMLGQPVQASESFHKHHSITKQLIENHMQARKLPEHGLTEWTGAVSPTKSSTIPPQQSFQTWSQPGPSRLS.

TPR repeat units lie at residues 11-46, 91-124, 131-164, 371-404, and 490-523; these read YAGL…NPPP, FEAS…TSGE, FRLF…AEQC, PILH…ADNP, and ACSL…SGKI. A disordered region spans residues 581 to 611; that stretch reads WTGAVSPTKSSTIPPQQSFQTWSQPGPSRLS. Positions 585-611 are enriched in polar residues; the sequence is VSPTKSSTIPPQQSFQTWSQPGPSRLS.

Belongs to the SCC4/mau-2 family. As to quaternary structure, component of the cohesin loading complex.

Its subcellular location is the nucleus. It localises to the nucleoplasm. In terms of biological role, required for association of the cohesin complex with chromatin during interphase. Plays a role in sister chromatid cohesion and normal progression through prometaphase. The chain is MAU2 chromatid cohesion factor homolog from Nematostella vectensis (Starlet sea anemone).